We begin with the raw amino-acid sequence, 445 residues long: Trigger factor (445 aa).

Residues 162 to 247 (GDQVTIDAIG…IKAVHTAEPT (86 aa)) form the PPIase FKBP-type domain.

It belongs to the FKBP-type PPIase family. Tig subfamily.

Its subcellular location is the cytoplasm. It catalyses the reaction [protein]-peptidylproline (omega=180) = [protein]-peptidylproline (omega=0). Functionally, involved in protein export. Acts as a chaperone by maintaining the newly synthesized protein in an open conformation. Functions as a peptidyl-prolyl cis-trans isomerase. The sequence is that of Trigger factor from Rickettsia peacockii (strain Rustic).